We begin with the raw amino-acid sequence, 901 residues long: Alanine--tRNA ligase (901 aa).

Zn(2+) contacts are provided by histidine 581, histidine 585, cysteine 684, and histidine 688.

This sequence belongs to the class-II aminoacyl-tRNA synthetase family. It depends on Zn(2+) as a cofactor.

The protein resides in the cytoplasm. The catalysed reaction is tRNA(Ala) + L-alanine + ATP = L-alanyl-tRNA(Ala) + AMP + diphosphate. Functionally, catalyzes the attachment of alanine to tRNA(Ala) in a two-step reaction: alanine is first activated by ATP to form Ala-AMP and then transferred to the acceptor end of tRNA(Ala). Also edits incorrectly charged Ser-tRNA(Ala) and Gly-tRNA(Ala) via its editing domain. The chain is Alanine--tRNA ligase from Mycobacterium ulcerans (strain Agy99).